The sequence spans 212 residues: Lipopolysaccharide core heptose(II)-phosphate phosphatase (212 aa).

Positions 1-32 (MSIGGVYELAFCRSSLKSKKYFIILLALAAIA) are cleaved as a signal peptide.

It belongs to the phosphoglycerate mutase family. Ais subfamily.

Its subcellular location is the periplasm. Its pathway is bacterial outer membrane biogenesis; lipopolysaccharide metabolism. In terms of biological role, catalyzes the dephosphorylation of heptose(II) of the outer membrane lipopolysaccharide core. The sequence is that of Lipopolysaccharide core heptose(II)-phosphate phosphatase from Shigella boydii serotype 4 (strain Sb227).